A 542-amino-acid chain; its full sequence is Ribonuclease Y (542 aa).

A helical membrane pass occupies residues Met1–Ala21. Positions Ser52 to Ala92 are disordered. Residues Ala59–Ala92 are compositionally biased toward basic and acidic residues. Residues Val229–Leu289 enclose the KH domain. One can recognise an HD domain in the interval Val355 to Ala449.

Belongs to the RNase Y family.

The protein localises to the cell membrane. Endoribonuclease that initiates mRNA decay. The sequence is that of Ribonuclease Y from Cutibacterium acnes (strain DSM 16379 / KPA171202) (Propionibacterium acnes).